A 354-amino-acid chain; its full sequence is Ferrochelatase (354 aa).

H214 and E295 together coordinate Fe cation.

It belongs to the ferrochelatase family.

It localises to the cytoplasm. The enzyme catalyses heme b + 2 H(+) = protoporphyrin IX + Fe(2+). The protein operates within porphyrin-containing compound metabolism; protoheme biosynthesis; protoheme from protoporphyrin-IX: step 1/1. In terms of biological role, catalyzes the ferrous insertion into protoporphyrin IX. This is Ferrochelatase from Burkholderia orbicola (strain MC0-3).